Consider the following 342-residue polypeptide: Protein BASIC PENTACYSTEINE6 (342 aa).

Positions 41–67 (AIQERNLAISEKKAAVAERDMAFLQRD) form a coiled coil. The tract at residues 41–76 (AIQERNLAISEKKAAVAERDMAFLQRDTAIAERNNA) is alanine-zipper. The segment at 143-199 (REMEPNDGLPTSPPAGSTLESAKPKRGKRVNPKATTQTAANKRGPKNQRKVKKESED) is disordered. The required for nucleus and nucleolus localization stretch occupies residues 164-195 (AKPKRGKRVNPKATTQTAANKRGPKNQRKVKK). A compositionally biased stretch (basic residues) spans 185–194 (RGPKNQRKVK). Positions 192–195 (KVKK) match the Nuclear localization signal motif.

It belongs to the BBR/BPC family. As to quaternary structure, homodimer. Heterodimer with BPC4. In terms of tissue distribution, expressed in seedlings, leaves and pistils. Detected in the base of flowers and tips of carpels, in sepal vasculature, in young rosette, in the lateral and tip of primary roots, and in ovule at the exception of the outer integument.

The protein resides in the nucleus. It is found in the nucleolus. In terms of biological role, transcriptional regulator that specifically binds to GA-rich elements (GAGA-repeats) present in regulatory sequences of genes involved in developmental processes. The polypeptide is Protein BASIC PENTACYSTEINE6 (BPC6) (Arabidopsis thaliana (Mouse-ear cress)).